A 418-amino-acid polypeptide reads, in one-letter code: Glutamyl-tRNA reductase (418 aa).

Substrate contacts are provided by residues 49–52 (TCNR), serine 109, 114–116 (EPQ), and glutamine 120. Cysteine 50 functions as the Nucleophile in the catalytic mechanism. Residue 189–194 (GAGETI) participates in NADP(+) binding.

It belongs to the glutamyl-tRNA reductase family. Homodimer.

It catalyses the reaction (S)-4-amino-5-oxopentanoate + tRNA(Glu) + NADP(+) = L-glutamyl-tRNA(Glu) + NADPH + H(+). It participates in porphyrin-containing compound metabolism; protoporphyrin-IX biosynthesis; 5-aminolevulinate from L-glutamyl-tRNA(Glu): step 1/2. Catalyzes the NADPH-dependent reduction of glutamyl-tRNA(Glu) to glutamate 1-semialdehyde (GSA). In Escherichia coli O6:K15:H31 (strain 536 / UPEC), this protein is Glutamyl-tRNA reductase.